The following is a 238-amino-acid chain: MTSILVSRFLLAALVLQYATIDAVNYCNLPCRGDRFHVGCGESAFAQECGESPETRDLLKEHTDEILSKINDVRDHVAKGSWGLPMAARMKVVVWDEELARLATRHTKGCLAETHACRNTERFSFPGQLNFEYTDDKLPQTKELIDAAIKKGHLQKHNISREIIESYRDNGPDGNVEELALALSDRVTAVGCGLTTWQDGAKARALLTCNFSSQTLGVDLSTKSGIVLDEKCIERMNV.

The N-terminal stretch at 1 to 23 (MTSILVSRFLLAALVLQYATIDA) is a signal peptide. A Cell attachment site motif is present at residues 32-34 (RGD). The 145-residue stretch at 67–211 (LSKINDVRDH…KARALLTCNF (145 aa)) folds into the SCP domain.

The protein belongs to the CRISP family. In terms of tissue distribution, expressed in salivary glands.

Its subcellular location is the secreted. Functionally, inhibits platelet aggregation induced by all agonists tested (ADP, arachidonic acid, the thromboxane A2 analog U46619, thrombin, and snake venom snaclecs (TMVA that activates platelet through GPIB, and stejnulxin that specifically acts through GPVI (GP6))). May act by competing with fibrinogen for binding to glycoprotein IIb/IIIa (ITGA2B/ITGB3). This Tabanus yao (Horsefly) protein is Tabinhibitin 5.